Consider the following 205-residue polypeptide: Large ribosomal subunit protein uL3 (205 aa).

Belongs to the universal ribosomal protein uL3 family. As to quaternary structure, part of the 50S ribosomal subunit. Forms a cluster with proteins L14 and L19.

One of the primary rRNA binding proteins, it binds directly near the 3'-end of the 23S rRNA, where it nucleates assembly of the 50S subunit. This chain is Large ribosomal subunit protein uL3, found in Thermosipho africanus (strain TCF52B).